The chain runs to 412 residues: Transcription factor NIGT1 (412 aa).

3 disordered regions span residues 54-241 (MDAA…RCWA), 286-310 (KYRL…PAPP), and 358-412 (AMLP…TTSA). Residues 90-112 (ESTHADAAKSGKKEEAETSERHS) show a composition bias toward basic and acidic residues. Residues 183-193 (ASSTTAAASST) show a composition bias toward low complexity. Residues 198 to 228 (SGDKPTDDDTEKHMETDKDNDKDAKDKDKEG) are compositionally biased toward basic and acidic residues. The HTH myb-type domain occupies 232 to 292 (PHRKPRRCWA…HLQKYRLHTR (61 aa)). The H-T-H motif DNA-binding region spans 263-288 (PKQIRELMKVDGLTNDEVKSHLQKYR). Basic and acidic residues predominate over residues 383-392 (SGSEGRRSGD). Low complexity predominate over residues 395-412 (DGSSSSPAVSSSSQTTSA).

Its subcellular location is the nucleus. In terms of biological role, transcriptional repressor that may play a role in response to nitrogen. May be involved in a time-dependent signaling for transcriptional regulation of nitrate-responsive genes. Binds specifically to the DNA sequence motif 5'-GAATC-3' or 5'-GAATATTC-3'. Represses the activity of its own promoter trough binding to these motifs. The sequence is that of Transcription factor NIGT1 from Oryza sativa subsp. japonica (Rice).